A 357-amino-acid chain; its full sequence is Dual-specificity RNA methyltransferase RlmN (357 aa).

Catalysis depends on glutamate 89, which acts as the Proton acceptor. Residues 109–340 (EREKYTVCVS…CTIRESKALD (232 aa)) form the Radical SAM core domain. An intrachain disulfide couples cysteine 116 to cysteine 345. Residues cysteine 123, cysteine 127, and cysteine 130 each coordinate [4Fe-4S] cluster. S-adenosyl-L-methionine-binding positions include 173 to 174 (GE), serine 203, 226 to 228 (SLH), and asparagine 302. Residue cysteine 345 is the S-methylcysteine intermediate of the active site.

The protein belongs to the radical SAM superfamily. RlmN family. [4Fe-4S] cluster serves as cofactor.

It is found in the cytoplasm. The enzyme catalyses adenosine(2503) in 23S rRNA + 2 reduced [2Fe-2S]-[ferredoxin] + 2 S-adenosyl-L-methionine = 2-methyladenosine(2503) in 23S rRNA + 5'-deoxyadenosine + L-methionine + 2 oxidized [2Fe-2S]-[ferredoxin] + S-adenosyl-L-homocysteine. It carries out the reaction adenosine(37) in tRNA + 2 reduced [2Fe-2S]-[ferredoxin] + 2 S-adenosyl-L-methionine = 2-methyladenosine(37) in tRNA + 5'-deoxyadenosine + L-methionine + 2 oxidized [2Fe-2S]-[ferredoxin] + S-adenosyl-L-homocysteine. In terms of biological role, specifically methylates position 2 of adenine 2503 in 23S rRNA and position 2 of adenine 37 in tRNAs. m2A2503 modification seems to play a crucial role in the proofreading step occurring at the peptidyl transferase center and thus would serve to optimize ribosomal fidelity. The polypeptide is Dual-specificity RNA methyltransferase RlmN (Helicobacter pylori (strain ATCC 700392 / 26695) (Campylobacter pylori)).